Reading from the N-terminus, the 207-residue chain is LexA repressor (207 aa).

The segment at residues 28 to 48 (VREIGEAVGLASSSTVHGHLA) is a DNA-binding region (H-T-H motif). Catalysis depends on for autocatalytic cleavage activity residues Ser-129 and Lys-167.

It belongs to the peptidase S24 family. As to quaternary structure, homodimer.

The enzyme catalyses Hydrolysis of Ala-|-Gly bond in repressor LexA.. Functionally, represses a number of genes involved in the response to DNA damage (SOS response), including recA and lexA. In the presence of single-stranded DNA, RecA interacts with LexA causing an autocatalytic cleavage which disrupts the DNA-binding part of LexA, leading to derepression of the SOS regulon and eventually DNA repair. In Bacillus licheniformis (strain ATCC 14580 / DSM 13 / JCM 2505 / CCUG 7422 / NBRC 12200 / NCIMB 9375 / NCTC 10341 / NRRL NRS-1264 / Gibson 46), this protein is LexA repressor.